We begin with the raw amino-acid sequence, 258 residues long: 5-oxoprolinase subunit A (258 aa).

Belongs to the LamB/PxpA family. Forms a complex composed of PxpA, PxpB and PxpC.

It catalyses the reaction 5-oxo-L-proline + ATP + 2 H2O = L-glutamate + ADP + phosphate + H(+). Catalyzes the cleavage of 5-oxoproline to form L-glutamate coupled to the hydrolysis of ATP to ADP and inorganic phosphate. This Deinococcus radiodurans (strain ATCC 13939 / DSM 20539 / JCM 16871 / CCUG 27074 / LMG 4051 / NBRC 15346 / NCIMB 9279 / VKM B-1422 / R1) protein is 5-oxoprolinase subunit A.